We begin with the raw amino-acid sequence, 1020 residues long: Sodium/potassium-transporting ATPase subunit alpha-2 (1020 aa).

Residues 1 to 5 (MGRGA) constitute a propeptide that is removed on maturation. The disordered stretch occupies residues 1–31 (MGRGAGREYSPAATTAENGGGKKKQKEKELD). The Cytoplasmic segment spans residues 6 to 85 (GREYSPAATT…NALTPPPTTP (80 aa)). Phosphoserine is present on Ser-10. Positions 80-82 (PPP) are interaction with phosphoinositide-3 kinase. The chain crosses the membrane as a helical span at residues 86-106 (EWVKFCRQLFGGFSILLWIGA). Topologically, residues 107–129 (LLCFLAYGILAAMEDEPSNDNLY) are extracellular. The helical transmembrane segment at 130–150 (LGIVLAAVVIVTGCFSYYQEA) threads the bilayer. Over 151 to 286 (KSSKIMDSFK…VGQTPIAMEI (136 aa)) the chain is Cytoplasmic. Residues 212–227 (DNSSLTGESEPQTRSP) show a composition bias toward polar residues. The interval 212–231 (DNSSLTGESEPQTRSPEFTH) is disordered. Residues 287–306 (EHFIQLITGVAVFLGVSFFV) form a helical membrane-spanning segment. Residues 307-318 (LSLILGYSWLEA) are Extracellular-facing. Residues 319–336 (VIFLIGIIVANVPEGLLA) traverse the membrane as a helical segment. The Cytoplasmic segment spans residues 337 to 769 (TVTVCLTLTA…EEGRLIFDNL (433 aa)). Asp-374 acts as the 4-aspartylphosphate intermediate in catalysis. A phosphoserine mark is found at Ser-439, Ser-450, Ser-496, and Ser-559. Residue Thr-570 is modified to Phosphothreonine. Ser-587 and Ser-672 each carry phosphoserine. Mg(2+) contacts are provided by Asp-714 and Asp-718. Residues 770 to 789 (KKSIAYTLTSNIPEITPFLL) traverse the membrane as a helical segment. The Extracellular portion of the chain corresponds to 790–799 (FIIANIPLPL). The chain crosses the membrane as a helical span at residues 800 to 820 (GTVTILCIDLGTDMVPAISLA). The Cytoplasmic segment spans residues 821 to 840 (YEAAESDIMKRQPRNSQTDK). Phosphoserine is present on Ser-826. Residues 841–863 (LVNERLISMAYGQIGMIQALGGF) traverse the membrane as a helical segment. The Extracellular segment spans residues 864 to 915 (FTYFVILAENGFLPSRLLGIRLDWDDRTTNDLEDSYGQEWTYEQRKVVEFTC). Residues 916-935 (HTAFFASIVVVQWADLIICK) traverse the membrane as a helical segment. The Cytoplasmic segment spans residues 936–948 (TRRNSVFQQGMKN). At Ser-940 the chain carries Phosphoserine; by PKA. A helical transmembrane segment spans residues 949–967 (KILIFGLLEETALAAFLSY). Topologically, residues 968 to 982 (CPGMGVALRMYPLKV) are extracellular. A helical membrane pass occupies residues 983-1003 (TWWFCAFPYSLLIFIYDEVRK). Topologically, residues 1004–1020 (LILRRYPGGWVEKETYY) are cytoplasmic.

The protein belongs to the cation transport ATPase (P-type) (TC 3.A.3) family. Type IIC subfamily. In terms of assembly, the sodium/potassium-transporting ATPase is composed of a catalytic alpha subunit, an auxiliary non-catalytic beta subunit and an additional regulatory subunit. Interacts with regulatory subunit FXYD1.

The protein localises to the membrane. Its subcellular location is the cell membrane. It carries out the reaction K(+)(out) + Na(+)(in) + ATP + H2O = K(+)(in) + Na(+)(out) + ADP + phosphate + H(+). Its function is as follows. This is the catalytic component of the active enzyme, which catalyzes the hydrolysis of ATP coupled with the exchange of sodium and potassium ions across the plasma membrane. This action creates the electrochemical gradient of sodium and potassium ions, providing the energy for active transport of various nutrients. This is Sodium/potassium-transporting ATPase subunit alpha-2 (Atp1a2) from Mus musculus (Mouse).